The sequence spans 185 residues: Peptide methionine sulfoxide reductase MsrA (185 aa).

The active site involves Cys12.

This sequence belongs to the MsrA Met sulfoxide reductase family.

The catalysed reaction is L-methionyl-[protein] + [thioredoxin]-disulfide + H2O = L-methionyl-(S)-S-oxide-[protein] + [thioredoxin]-dithiol. It catalyses the reaction [thioredoxin]-disulfide + L-methionine + H2O = L-methionine (S)-S-oxide + [thioredoxin]-dithiol. Has an important function as a repair enzyme for proteins that have been inactivated by oxidation. Catalyzes the reversible oxidation-reduction of methionine sulfoxide in proteins to methionine. The chain is Peptide methionine sulfoxide reductase MsrA from Granulibacter bethesdensis (strain ATCC BAA-1260 / CGDNIH1).